The sequence spans 249 residues: NAD kinase (249 aa).

Asp-45 acts as the Proton acceptor in catalysis. NAD(+) is bound by residues Asp-45–Gly-46, Arg-50, Asn-110–Glu-111, Asp-138, and Ser-149–Ser-154.

The protein belongs to the NAD kinase family. Requires a divalent metal cation as cofactor.

It localises to the cytoplasm. It carries out the reaction NAD(+) + ATP = ADP + NADP(+) + H(+). Functionally, involved in the regulation of the intracellular balance of NAD and NADP, and is a key enzyme in the biosynthesis of NADP. Catalyzes specifically the phosphorylation on 2'-hydroxyl of the adenosine moiety of NAD to yield NADP. In Saccharolobus islandicus (strain Y.N.15.51 / Yellowstone #2) (Sulfolobus islandicus), this protein is NAD kinase.